We begin with the raw amino-acid sequence, 447 residues long: Methylenetetrahydrofolate--tRNA-(uracil-5-)-methyltransferase TrmFO (447 aa).

13-18 (GAGLAG) contacts FAD.

Belongs to the MnmG family. TrmFO subfamily. FAD serves as cofactor.

The protein localises to the cytoplasm. It carries out the reaction uridine(54) in tRNA + (6R)-5,10-methylene-5,6,7,8-tetrahydrofolate + NADH + H(+) = 5-methyluridine(54) in tRNA + (6S)-5,6,7,8-tetrahydrofolate + NAD(+). The catalysed reaction is uridine(54) in tRNA + (6R)-5,10-methylene-5,6,7,8-tetrahydrofolate + NADPH + H(+) = 5-methyluridine(54) in tRNA + (6S)-5,6,7,8-tetrahydrofolate + NADP(+). Its function is as follows. Catalyzes the folate-dependent formation of 5-methyl-uridine at position 54 (M-5-U54) in all tRNAs. This chain is Methylenetetrahydrofolate--tRNA-(uracil-5-)-methyltransferase TrmFO, found in Streptococcus thermophilus (strain ATCC BAA-491 / LMD-9).